The primary structure comprises 283 residues: 9,11-endoperoxide prostaglandin H2 reductase (283 aa).

NADP(+)-binding positions include Val-23–Trp-24 and Asp-48. Tyr-53 functions as the Proton donor in the catalytic mechanism. His-111 provides a ligand contact to substrate. NADP(+)-binding positions include Ser-140–Asn-141, Gln-162, Trp-188–Ser-193, Lys-234–Thr-236, and Arg-240–Asn-244. The tract at residues Asn-264–Ala-283 is disordered.

Belongs to the aldo/keto reductase family. As to quaternary structure, monomer.

Its subcellular location is the cytoplasm. The enzyme catalyses prostaglandin F2alpha + NADP(+) = prostaglandin H2 + NADPH + H(+). The protein operates within lipid metabolism; prostaglandin biosynthesis. In terms of biological role, catalyzes the NADP-dependent formation of prostaglandin F2-alpha from prostaglandin H2. Also has aldo/ketoreductase activity towards the synthetic substrates 9,10-phenanthrenequinone and p-nitrobenzaldehyde. This chain is 9,11-endoperoxide prostaglandin H2 reductase, found in Trypanosoma cruzi (strain CL Brener).